Here is a 561-residue protein sequence, read N- to C-terminus: NO-associated protein 1, chloroplastic/mitochondrial (561 aa).

Residues Met1–Asn31 constitute a chloroplast and mitochondrion transit peptide. Residues Cys108 to Cys111, Tyr166 to Ser174, Thr223 to Asp226, Ser260 to Lys261, and Asn289 to Ala294 each bind GTP. Residues Ala175–His351 enclose the CP-type G domain.

Belongs to the TRAFAC class YlqF/YawG GTPase family. NOA1 subfamily. In terms of tissue distribution, expressed in aleurone layer and the embryo.

Its subcellular location is the mitochondrion. The protein resides in the plastid. The protein localises to the chloroplast. The enzyme catalyses 2 L-arginine + 3 NADPH + 4 O2 + H(+) = 2 L-citrulline + 2 nitric oxide + 3 NADP(+) + 4 H2O. Its activity is regulated as follows. Stimulated by calcium/calmodulin. Inhibited by L-NAME. Not activated by tetrahydrobiopterin (BH4), FAD, FMN, or heme. Functionally, exhibits cGTPase activity; binds and hydrolyzes specifically GTP. May participate in ribosome assembly and stability and thus regulates protein synthesis in chloroplasts. The GTPase activity requires MgCl(2)and the presence of either KCl or (NH(4))(2)SO(4). Involved in the post-transcriptional regulation of the methylerythritol phosphate (MEP) pathway. Involved in chlorophyll-a fluorescence regulation. In terms of biological role, may mediate the production or accumulation of nitric oxide (NO) which is a messenger molecule involved in hormonal signaling and defense responses in plant. Acts as an antisenescence agent. Plays a crucial role in both extracellular calmodulin (ExtCaM)-triggered and salicylic acid (SA)-mediated H(2)O(2)-dependent stomatal closure. In Arabidopsis thaliana (Mouse-ear cress), this protein is NO-associated protein 1, chloroplastic/mitochondrial (NOA1).